The primary structure comprises 311 residues: HPr kinase/phosphorylase (311 aa).

Catalysis depends on residues histidine 139 and lysine 160. Residue 154–161 (GESGVGKS) coordinates ATP. Serine 161 is a Mg(2+) binding site. The Proton acceptor; for phosphorylation activity. Proton donor; for dephosphorylation activity role is filled by aspartate 178. The tract at residues 202–211 (IEIRGIGILD) is important for the catalytic mechanism of both phosphorylation and dephosphorylation. Mg(2+) is bound at residue glutamate 203. Arginine 244 is an active-site residue. The segment at 265 to 270 (PVRPGR) is important for the catalytic mechanism of dephosphorylation.

This sequence belongs to the HPrK/P family. As to quaternary structure, homohexamer. Mg(2+) is required as a cofactor.

It carries out the reaction [HPr protein]-L-serine + ATP = [HPr protein]-O-phospho-L-serine + ADP + H(+). The catalysed reaction is [HPr protein]-O-phospho-L-serine + phosphate + H(+) = [HPr protein]-L-serine + diphosphate. Catalyzes the ATP- as well as the pyrophosphate-dependent phosphorylation of a specific serine residue in HPr, a phosphocarrier protein of the phosphoenolpyruvate-dependent sugar phosphotransferase system (PTS). HprK/P also catalyzes the pyrophosphate-producing, inorganic phosphate-dependent dephosphorylation (phosphorolysis) of seryl-phosphorylated HPr (P-Ser-HPr). The two antagonistic activities of HprK/P are regulated by several intracellular metabolites, which change their concentration in response to the absence or presence of rapidly metabolisable carbon sources (glucose, fructose, etc.) in the growth medium. Therefore, by controlling the phosphorylation state of HPr, HPrK/P is a sensor enzyme that plays a major role in the regulation of carbon metabolism and sugar transport: it mediates carbon catabolite repression (CCR), and regulates PTS-catalyzed carbohydrate uptake and inducer exclusion. The polypeptide is HPr kinase/phosphorylase (Caldicellulosiruptor bescii (strain ATCC BAA-1888 / DSM 6725 / KCTC 15123 / Z-1320) (Anaerocellum thermophilum)).